A 262-amino-acid polypeptide reads, in one-letter code: MIDSTAVIHPTSIVEDGAVIGAGVQIGPFCVIGANVSIGEGTTLKSHIVVNGHTRIGKDNTVYQFASIGEANQDLKYAGEPTRVEIGDRNRIRESVTIHRGTVQSDGVTRVGDDNLLMVNAHVAHDCVVGNHCILANNATLAGHVIVDDYAIIGGMTAVHQFCTIGAHVMVGGCSGVAQDVPPYVIAQGNHATPFGINLIGLQRRGFSKEALHAIRAAYKLLYRSGKTLDEVKPEIADIAQAHPEVQPFYDFFARSTRGLIR.

Belongs to the transferase hexapeptide repeat family. LpxA subfamily. In terms of assembly, homotrimer.

It is found in the cytoplasm. It carries out the reaction a (3R)-hydroxyacyl-[ACP] + UDP-N-acetyl-alpha-D-glucosamine = a UDP-3-O-[(3R)-3-hydroxyacyl]-N-acetyl-alpha-D-glucosamine + holo-[ACP]. The protein operates within glycolipid biosynthesis; lipid IV(A) biosynthesis; lipid IV(A) from (3R)-3-hydroxytetradecanoyl-[acyl-carrier-protein] and UDP-N-acetyl-alpha-D-glucosamine: step 1/6. In terms of biological role, involved in the biosynthesis of lipid A, a phosphorylated glycolipid that anchors the lipopolysaccharide to the outer membrane of the cell. The chain is Acyl-[acyl-carrier-protein]--UDP-N-acetylglucosamine O-acyltransferase from Erwinia tasmaniensis (strain DSM 17950 / CFBP 7177 / CIP 109463 / NCPPB 4357 / Et1/99).